Consider the following 280-residue polypeptide: Acetylglutamate kinase (280 aa).

Residues 64 to 65, Arg86, and Asn179 contribute to the substrate site; that span reads GG.

Belongs to the acetylglutamate kinase family. ArgB subfamily.

The protein localises to the cytoplasm. It catalyses the reaction N-acetyl-L-glutamate + ATP = N-acetyl-L-glutamyl 5-phosphate + ADP. The protein operates within amino-acid biosynthesis; L-arginine biosynthesis; N(2)-acetyl-L-ornithine from L-glutamate: step 2/4. Functionally, catalyzes the ATP-dependent phosphorylation of N-acetyl-L-glutamate. The sequence is that of Acetylglutamate kinase from Campylobacter fetus subsp. fetus (strain 82-40).